A 160-amino-acid polypeptide reads, in one-letter code: Troponin C, isoform 2 (160 aa).

EF-hand domains follow at residues 15 to 50 (DQIE…MGQA), 51 to 86 (FEER…FVVN), 92 to 127 (GLEE…LDDN), and 128 to 160 (VSEE…MSGE). Residues Asp64, Asp66, Ser68, Glu70, and Glu75 each coordinate Ca(2+). Residues Asp141, Asp143, Ser145, Thr147, and Glu152 each contribute to the Ca(2+) site.

It belongs to the troponin C family. In terms of tissue distribution, pharyngeal muscle.

This Caenorhabditis elegans protein is Troponin C, isoform 2 (tnc-2).